The sequence spans 189 residues: MPDPLDPSDSSTGLPSDDQVLELLAPEFSRSGVEIESVVVSDGGVAGRPSRIAVVVDSDTPVDLDAVAGLSRTASALLDEADTGWQAYELEITTPGVDRPLTTVAHFRRAHLRLAQIRLTNGEDLLGRIGITHDDGVQVVLRKPIKGTGWTVRDLAFSDIESAVVQVEFNTPNPQELNLAGAAETGGGA.

This sequence belongs to the RimP family.

It localises to the cytoplasm. Functionally, required for maturation of 30S ribosomal subunits. The chain is Ribosome maturation factor RimP from Mycobacteroides abscessus (strain ATCC 19977 / DSM 44196 / CCUG 20993 / CIP 104536 / JCM 13569 / NCTC 13031 / TMC 1543 / L948) (Mycobacterium abscessus).